The chain runs to 177 residues: O-acetyl-ADP-ribose deacetylase (177 aa).

Residues 1 to 175 (MKTRIHVVQG…LYERLLTQQG (175 aa)) enclose the Macro domain. Substrate-binding positions include 11-12 (DI), asparagine 25, 33-35 (GVD), and 122-126 (STGVY). Aspartate 35 (proton acceptor) is an active-site residue.

This sequence belongs to the MacroD-type family. YmdB subfamily. In terms of assembly, homodimer. Interacts with RNase III.

It carries out the reaction 3''-O-acetyl-ADP-D-ribose + H2O = ADP-D-ribose + acetate + H(+). The catalysed reaction is 2''-O-acetyl-ADP-D-ribose + H2O = ADP-D-ribose + acetate + H(+). Deacetylates O-acetyl-ADP ribose to yield ADP-ribose and free acetate. Down-regulates ribonuclease 3 (RNase III) activity. Acts by interacting directly with the region of the ribonuclease that is required for dimerization/activation. The chain is O-acetyl-ADP-ribose deacetylase from Shigella dysenteriae serotype 1 (strain Sd197).